We begin with the raw amino-acid sequence, 651 residues long: Probable inactive purple acid phosphatase 9 (651 aa).

An N-terminal signal peptide occupies residues M1–S20. 3 N-linked (GlcNAc...) asparagine glycosylation sites follow: N32, N96, and N202. The Fe cation site is built by D305 and Y308. D305 is a Zn(2+) binding site. N338 contacts Zn(2+). Residue N338 participates in substrate binding. N-linked (GlcNAc...) asparagine glycosylation is found at N378 and N432. Residue H444 participates in Zn(2+) binding. The N-linked (GlcNAc...) asparagine glycan is linked to N475. H483 is a binding site for Zn(2+). H483–H485 lines the substrate pocket. H485 contacts Fe cation. N-linked (GlcNAc...) asparagine glycans are attached at residues N495 and N640.

Belongs to the metallophosphoesterase superfamily. Purple acid phosphatase family. As to quaternary structure, homodimer. The cofactor is Fe cation. Zn(2+) is required as a cofactor. Expressed in roots, stems, leaves, flowers and siliques.

It localises to the secreted. The chain is Probable inactive purple acid phosphatase 9 (PAP9) from Arabidopsis thaliana (Mouse-ear cress).